A 98-amino-acid chain; its full sequence is NADH-ubiquinone oxidoreductase chain 4L (98 aa).

The next 3 membrane-spanning stretches (helical) occupy residues 1 to 21, 29 to 49, and 61 to 81; these read MSLT…GLLM, ALLC…ITIL, and IILL…LVMV.

This sequence belongs to the complex I subunit 4L family. In terms of assembly, core subunit of respiratory chain NADH dehydrogenase (Complex I) which is composed of 45 different subunits.

It localises to the mitochondrion inner membrane. It carries out the reaction a ubiquinone + NADH + 5 H(+)(in) = a ubiquinol + NAD(+) + 4 H(+)(out). In terms of biological role, core subunit of the mitochondrial membrane respiratory chain NADH dehydrogenase (Complex I) which catalyzes electron transfer from NADH through the respiratory chain, using ubiquinone as an electron acceptor. Part of the enzyme membrane arm which is embedded in the lipid bilayer and involved in proton translocation. The sequence is that of NADH-ubiquinone oxidoreductase chain 4L (MT-ND4L) from Rhinophylla pumilio (Dwarf little fruit bat).